Here is a 343-residue protein sequence, read N- to C-terminus: Transmembrane protein 82 (343 aa).

8 consecutive transmembrane segments (helical) span residues 30–50 (GLIG…YFFV), 77–97 (LAGL…LVVL), 121–141 (LQLY…GLSF), 145–167 (GAPH…GLGA), 203–223 (LLGR…VALI), 233–252 (AMRF…IYMQ), 263–283 (SQVQ…LTVG), and 285–305 (WLDL…LVGV). Residues 320–333 (QRPPVSTPSQPLPS) show a composition bias toward pro residues. Residues 320-343 (QRPPVSTPSQPLPSAPQSQSSAPS) are disordered. The segment covering 334–343 (APQSQSSAPS) has biased composition (low complexity).

It belongs to the TMEM82 family.

The protein resides in the membrane. The sequence is that of Transmembrane protein 82 (TMEM82) from Homo sapiens (Human).